The primary structure comprises 157 residues: MAVEILNESGIEVPEDALLRMARHVYARLHVHERAETAVTVVDAARMAELHEEWMDLPGPTDVMSLPMDELTPGSPEAPAEGVLGDVVLCPEVAAEQAARGGHSRDDELLLLLTHGMLHLLGYDHVEDAEREEMFTLQDRLVSEVLGRPAPAPTVED.

Zn(2+) contacts are provided by His-115, His-119, and His-125.

The protein belongs to the endoribonuclease YbeY family. The cofactor is Zn(2+).

It localises to the cytoplasm. In terms of biological role, single strand-specific metallo-endoribonuclease involved in late-stage 70S ribosome quality control and in maturation of the 3' terminus of the 16S rRNA. This Micrococcus luteus (strain ATCC 4698 / DSM 20030 / JCM 1464 / CCM 169 / CCUG 5858 / IAM 1056 / NBRC 3333 / NCIMB 9278 / NCTC 2665 / VKM Ac-2230) (Micrococcus lysodeikticus) protein is Endoribonuclease YbeY.